The following is a 173-amino-acid chain: Rubredoxin-2 (173 aa).

2 Rubredoxin-like domains span residues 2–53 and 119–170; these read ASYK…FMLI and YLKW…YVLY. C6, C9, C39, C42, C124, C127, C157, and C160 together coordinate Fe cation.

The protein belongs to the rubredoxin family. The cofactor is Fe(3+).

It localises to the cytoplasm. It functions in the pathway hydrocarbon metabolism; alkane degradation. Involved in the hydrocarbon hydroxylating system, which transfers electrons from NADH to rubredoxin reductase and then through rubredoxin to alkane 1 monooxygenase. In Ectopseudomonas oleovorans (Pseudomonas oleovorans), this protein is Rubredoxin-2 (alkG).